The following is a 212-amino-acid chain: Ropporin-1 (212 aa).

The 38-residue stretch at 12 to 49 (PELPKMLKEFAKAAIRAQPQDLIQWGADYFEALSRGET) folds into the RIIa domain. Residue Ser56 is modified to Phosphoserine. The tract at residues 209 to 212 (VWLE) is interaction with RHPN1.

Belongs to the ropporin family. In terms of assembly, homodimer. Interacts with AKAP3. May interact with SPA17. Interacts with RHPN1. Interacts with FSCB; the interaction increases upon spermatozoa capacitation conditions. Interacts with CFAP61. In terms of processing, sumoylated, sumoylation decreases upon spermatozoa capacitation conditions.

It is found in the cell projection. Its subcellular location is the cilium. It localises to the flagellum. Important for male fertility. With ROPN1L, involved in fibrous sheath integrity and sperm motility, plays a role in PKA-dependent signaling processes required for spermatozoa capacitation. This is Ropporin-1 (ROPN1) from Macaca fascicularis (Crab-eating macaque).